A 260-amino-acid polypeptide reads, in one-letter code: Lipid II isoglutaminyl synthase (glutamine-hydrolyzing) subunit GatD (260 aa).

The 199-residue stretch at 16-214 (QLNIAHLYGN…FHGPILSRNA (199 aa)) folds into the GATase cobBQ-type domain. C107 acts as the Nucleophile in catalysis. A substrate-binding site is contributed by R142. H206 is a catalytic residue.

This sequence belongs to the CobB/CobQ family. GatD subfamily. In terms of assembly, forms a heterodimer with MurT.

It carries out the reaction beta-D-GlcNAc-(1-&gt;4)-Mur2Ac(oyl-L-Ala-gamma-D-Glu-L-Lys-D-Ala-D-Ala)-di-trans,octa-cis-undecaprenyl diphosphate + L-glutamine + ATP + H2O = beta-D-GlcNAc-(1-&gt;4)-Mur2Ac(oyl-L-Ala-D-isoglutaminyl-L-Lys-D-Ala-D-Ala)-di-trans,octa-cis-undecaprenyl diphosphate + L-glutamate + ADP + phosphate + H(+). It catalyses the reaction L-glutamine + H2O = L-glutamate + NH4(+). It participates in cell wall biogenesis; peptidoglycan biosynthesis. Its function is as follows. The lipid II isoglutaminyl synthase complex catalyzes the formation of alpha-D-isoglutamine in the cell wall lipid II stem peptide. The GatD subunit catalyzes the hydrolysis of glutamine to glutamate and ammonia. The resulting ammonia molecule is channeled to the active site of MurT. The sequence is that of Lipid II isoglutaminyl synthase (glutamine-hydrolyzing) subunit GatD from Streptococcus pneumoniae (strain ATCC BAA-255 / R6).